A 349-amino-acid chain; its full sequence is N-acetyltaurine hydrolase (349 aa).

Positions 26, 28, 169, 201, 230, and 298 each coordinate a divalent metal cation.

This sequence belongs to the metallo-dependent hydrolases superfamily. Phosphotriesterase family. A divalent metal cation serves as cofactor.

Its subcellular location is the cytoplasm. The protein localises to the cytosol. The catalysed reaction is N-acetyltaurine + H2O = taurine + acetate. The enzyme catalyses N-propanoyltaurine + H2O = propanoate + taurine. It catalyses the reaction N-acetyl-L-methionine + H2O = L-methionine + acetate. It carries out the reaction N-acetyl-L-isoleucine + H2O = L-isoleucine + acetate. The catalysed reaction is N-acetyl-L-leucine + H2O = L-leucine + acetate. The enzyme catalyses N-acetyl-L-valine + H2O = L-valine + acetate. Its function is as follows. N-acetyltaurine hydrolase that catalyzes the hydrolysis of N-acetyltaurine into taurine and acetate. PTER also acts on other N-acetyl amino acids (Met, Ile, Leu, Val) and N-propionyltaurine, but at lower rates. The protein is N-acetyltaurine hydrolase (pter) of Salmo salar (Atlantic salmon).